The primary structure comprises 454 residues: Probable ECA polymerase (454 aa).

A run of 11 helical transmembrane segments spans residues 3–23, 39–59, 61–81, 119–139, 154–174, 180–200, 201–221, 222–242, 340–360, 377–397, and 409–429; these read LGQFGGLFCIYLIAVIFILTL, FSMLYLLTFYFGFPLTCMLVF, FGVAVVPVEYLLYAMLSATAF, LALVAVGTVGIFFMQNGFLLF, GVALKRFFYFFIPAMLVVYFL, AWFFFLASTVAFGILTYVIVG, GTRANIIIAFSLFLFIGIVRG, WITLWMLAAAGVFGIVGMFWL, LVVMGGVLFIPLGAIVVGLII, YKAAILQSFCFGAVFNIIVLA, and VFFCVIFGACLVLAKLLYWLF.

This sequence belongs to the WzyE family. As to quaternary structure, probably part of a complex composed of WzxE, WzyE and WzzE.

It is found in the cell inner membrane. Its pathway is bacterial outer membrane biogenesis; enterobacterial common antigen biosynthesis. Its function is as follows. Probably involved in the polymerization of enterobacterial common antigen (ECA) trisaccharide repeat units. This chain is Probable ECA polymerase, found in Yersinia pestis bv. Antiqua (strain Angola).